Here is a 31-residue protein sequence, read N- to C-terminus: Cyclotide Hyfl-A (31 aa).

A cross-link (cyclopeptide (Ser-Asn)) is located at residues 1 to 31; sequence SISCGESCVYIPCTVTALVGCTCKDKVCYLN. 3 disulfide bridges follow: cysteine 4/cysteine 21, cysteine 8/cysteine 23, and cysteine 13/cysteine 28.

This sequence belongs to the cyclotide family. Bracelet subfamily. Post-translationally, this is a cyclic peptide.

In terms of biological role, probably participates in a plant defense mechanism. The protein is Cyclotide Hyfl-A of Hybanthus floribundus (Greenviolet).